A 296-amino-acid polypeptide reads, in one-letter code: 4-hydroxy-tetrahydrodipicolinate synthase (296 aa).

A pyruvate-binding site is contributed by threonine 45. The Proton donor/acceptor role is filled by tyrosine 133. The active-site Schiff-base intermediate with substrate is lysine 161. Isoleucine 203 provides a ligand contact to pyruvate.

This sequence belongs to the DapA family. In terms of assembly, homotetramer; dimer of dimers.

It localises to the cytoplasm. It catalyses the reaction L-aspartate 4-semialdehyde + pyruvate = (2S,4S)-4-hydroxy-2,3,4,5-tetrahydrodipicolinate + H2O + H(+). The protein operates within amino-acid biosynthesis; L-lysine biosynthesis via DAP pathway; (S)-tetrahydrodipicolinate from L-aspartate: step 3/4. Catalyzes the condensation of (S)-aspartate-beta-semialdehyde [(S)-ASA] and pyruvate to 4-hydroxy-tetrahydrodipicolinate (HTPA). The polypeptide is 4-hydroxy-tetrahydrodipicolinate synthase (Idiomarina loihiensis (strain ATCC BAA-735 / DSM 15497 / L2-TR)).